A 600-amino-acid chain; its full sequence is Gamma-terpinene synthase, chloroplastic (600 aa).

A chloroplast-targeting transit peptide spans 1 to 40 (MALNLLSSLPAACNFTRLSLPLSSKVNGFVPPITQVQYPM). 4 residues coordinate Mg(2+): D353, D357, D498, and E506. The DDXXD motif motif lies at 353–357 (DDVYD).

The protein belongs to the terpene synthase family. The cofactor is Mn(2+). Requires Mg(2+) as cofactor.

Its subcellular location is the plastid. It localises to the chloroplast. The enzyme catalyses (2E)-geranyl diphosphate = gamma-terpinene + diphosphate. The protein operates within secondary metabolite biosynthesis; terpenoid biosynthesis. With respect to regulation, inhibited by 100 mM KCl. Its function is as follows. Monoterpene synthase which catalyzes the conversion of geranyl diphosphate to gamma-terpinene and the minor products limonene, alpha-pinene, beta-pinene, alpha-terpinolene, alpha-thujene, alpha-terpinene, myrcene and sabinene. This Citrus limon (Lemon) protein is Gamma-terpinene synthase, chloroplastic.